A 205-amino-acid chain; its full sequence is Imidazoleglycerol-phosphate dehydratase (205 aa).

Positions 1–27 (MKQASPRAGGAKARRGQVARKTKETDV) are disordered.

Belongs to the imidazoleglycerol-phosphate dehydratase family.

The protein resides in the cytoplasm. It catalyses the reaction D-erythro-1-(imidazol-4-yl)glycerol 3-phosphate = 3-(imidazol-4-yl)-2-oxopropyl phosphate + H2O. Its pathway is amino-acid biosynthesis; L-histidine biosynthesis; L-histidine from 5-phospho-alpha-D-ribose 1-diphosphate: step 6/9. The chain is Imidazoleglycerol-phosphate dehydratase from Anaeromyxobacter sp. (strain Fw109-5).